A 299-amino-acid polypeptide reads, in one-letter code: Homoserine kinase (299 aa).

84–94 contacts ATP; the sequence is PISRGLGSSSA.

Belongs to the GHMP kinase family. Homoserine kinase subfamily.

Its subcellular location is the cytoplasm. The catalysed reaction is L-homoserine + ATP = O-phospho-L-homoserine + ADP + H(+). It functions in the pathway amino-acid biosynthesis; L-threonine biosynthesis; L-threonine from L-aspartate: step 4/5. Its function is as follows. Catalyzes the ATP-dependent phosphorylation of L-homoserine to L-homoserine phosphate. In Helicobacter hepaticus (strain ATCC 51449 / 3B1), this protein is Homoserine kinase.